The following is a 633-amino-acid chain: Membrane protein insertase YidC (633 aa).

Transmembrane regions (helical) follow at residues 3–23 (KNTLIGFLLIGVVLFAFSWFN), 377–397 (FIHNYGILILLMTIIVKIILF), 453–473 (LPMLLQMPILIALFMFFPSAI), 499–519 (IPIITPYFGNHISLFCLLMTI), 541–561 (GMKAMMYMMPLMFLVFFNQYA), and 562–582 (SGLTYYYFISTLITIVQTLIF). Residues 612–633 (LEEAQRAQQETLRKQQEAKKKR) are disordered.

This sequence belongs to the OXA1/ALB3/YidC family. Type 1 subfamily. As to quaternary structure, interacts with the Sec translocase complex via SecD. Specifically interacts with transmembrane segments of nascent integral membrane proteins during membrane integration.

Its subcellular location is the cell inner membrane. Its function is as follows. Required for the insertion and/or proper folding and/or complex formation of integral membrane proteins into the membrane. Involved in integration of membrane proteins that insert both dependently and independently of the Sec translocase complex, as well as at least some lipoproteins. Aids folding of multispanning membrane proteins. The chain is Membrane protein insertase YidC from Parabacteroides distasonis (strain ATCC 8503 / DSM 20701 / CIP 104284 / JCM 5825 / NCTC 11152).